The chain runs to 193 residues: Protein hunchback (193 aa).

Residues 18–31 (HLHHHHAHHSHHRH) show a composition bias toward basic residues. Disordered stretches follow at residues 18–57 (HLHHHHAHHSHHRHDSNSNSNASSPHQSPLPSPNPPSNTN) and 153–193 (LTPP…KYMA). The segment covering 34 to 44 (NSNSNASSPHQ) has biased composition (low complexity). The segment covering 174–193 (EPEKEHDLMSNSSEDMKYMA) has biased composition (basic and acidic residues).

It belongs to the hunchback C2H2-type zinc-finger protein family.

Its subcellular location is the nucleus. Functionally, gap class segmentation protein that controls development of head structures. The chain is Protein hunchback (hb) from Drosophila petalopeza (Fruit fly).